A 352-amino-acid chain; its full sequence is S-adenosylmethionine:tRNA ribosyltransferase-isomerase (352 aa).

Belongs to the QueA family. Monomer.

The protein resides in the cytoplasm. The enzyme catalyses 7-aminomethyl-7-carbaguanosine(34) in tRNA + S-adenosyl-L-methionine = epoxyqueuosine(34) in tRNA + adenine + L-methionine + 2 H(+). It functions in the pathway tRNA modification; tRNA-queuosine biosynthesis. Transfers and isomerizes the ribose moiety from AdoMet to the 7-aminomethyl group of 7-deazaguanine (preQ1-tRNA) to give epoxyqueuosine (oQ-tRNA). The polypeptide is S-adenosylmethionine:tRNA ribosyltransferase-isomerase (Vibrio cholerae serotype O1 (strain ATCC 39315 / El Tor Inaba N16961)).